Consider the following 303-residue polypeptide: tRNA dimethylallyltransferase (303 aa).

10–17 (GPTASGKS) lines the ATP pocket. 12 to 17 (TASGKS) is a binding site for substrate. The interval 35-38 (DSMQ) is interaction with substrate tRNA.

The protein belongs to the IPP transferase family. Monomer. It depends on Mg(2+) as a cofactor.

The catalysed reaction is adenosine(37) in tRNA + dimethylallyl diphosphate = N(6)-dimethylallyladenosine(37) in tRNA + diphosphate. Its function is as follows. Catalyzes the transfer of a dimethylallyl group onto the adenine at position 37 in tRNAs that read codons beginning with uridine, leading to the formation of N6-(dimethylallyl)adenosine (i(6)A). The sequence is that of tRNA dimethylallyltransferase from Methylobacterium nodulans (strain LMG 21967 / CNCM I-2342 / ORS 2060).